A 61-amino-acid chain; its full sequence is Aerolysin regulatory protein (61 aa).

The segment covering Met1 to Glu14 has biased composition (basic residues). The tract at residues Met1–Arg61 is disordered. The segment covering Asp51–Arg61 has biased composition (polar residues).

Functionally, regulation of the expression of aerolysin. This is Aerolysin regulatory protein (aerC) from Aeromonas sobria.